Here is a 178-residue protein sequence, read N- to C-terminus: uncharacterized protein (178 aa).

This is an uncharacterized protein from Sulfolobus islandicus filamentous virus (isolate Iceland/Hveragerdi) (SIFV).